The chain runs to 420 residues: Transcription factor bHLH89 (420 aa).

Positions 196–216 (EENNNLDDGLNRKGRGSKKRK) are disordered. Residues 207–216 (RKGRGSKKRK) are compositionally biased toward basic residues. The bHLH domain maps to 212 to 261 (SKKRKIFPTERERRVHFKDRFGDLKNLIPNPTKNDRASIVGEAIDYIKEL).

In terms of assembly, homodimer. As to expression, flowers.

It is found in the nucleus. In Arabidopsis thaliana (Mouse-ear cress), this protein is Transcription factor bHLH89 (BHLH89).